Here is a 1969-residue protein sequence, read N- to C-terminus: Hybrid signal transduction histidine kinase B (1969 aa).

Residues 1 to 10 show a composition bias toward polar residues; the sequence is MEKSEQTNSF. Disordered stretches follow at residues 1–91, 218–335, 412–436, 468–505, and 551–598; these read MEKS…HETK, KINE…KTKQ, QQQQQHHRHYHHHINSGGSSGSSDK, NNINIQAPSTPVQSRNYPLFTTQSPKNANSASKSKNKL, and GSGG…YNNN. The segment covering 11–55 has biased composition (low complexity); it reads ESSNNNNNNIDSNINNNLENNNNKNNNNNNNNNNNNNNNNNNIEN. Residues 56–65 are compositionally biased toward basic and acidic residues; sequence SIDKNNKEDN. The segment covering 72–86 has biased composition (basic residues); sequence SHRKHRTRLKSKKGN. Residues 242-252 show a composition bias toward polar residues; sequence TNSSILKSSEQ. Over residues 280-292 the composition is skewed to low complexity; the sequence is SSSSDEGSDNSKS. Residues 293–304 are compositionally biased toward polar residues; sequence QHSSVNTPTLSR. Low complexity predominate over residues 313–335; sequence SQQSQKQSQQQSQQPQQQNKTKQ. Over residues 416–425 the composition is skewed to basic residues; it reads QHHRHYHHHI. The segment covering 469–492 has biased composition (polar residues); sequence NINIQAPSTPVQSRNYPLFTTQSP. A compositionally biased stretch (gly residues) spans 551–571; sequence GSGGGGSGGGGGGGGGGGGIG. Residues 574 to 598 show a composition bias toward low complexity; sequence SSFLDDNNNLNNGENFKNSNSYNNN. 5 helical membrane passes run 660–680, 684–704, 708–728, 747–767, and 795–815; these read AYILNFLNLVLFVVYLLSTIL, EWFIFAPGILLSVIYFFLGKI, MYLIAFLTISTAVAINITSII, LVMIMVPLLFPSIVYSIVILI, and FGELLRSIIIVFVILMFYTIL. Positions 967–1188 constitute a Histidine kinase domain; it reads TVSHELRTPI…TFSFTIPCGI (222 aa). The residue at position 970 (His970) is a Phosphohistidine; by autocatalysis. Disordered regions lie at residues 1359–1415, 1521–1563, 1617–1709, and 1755–1832; these read ASKD…HQLI, GIAL…TTQS, NNNF…SSHS, and QKPQ…TAAA. Over residues 1373 to 1398 the composition is skewed to gly residues; sequence GDGGRSLSGGGGGVGSNGNGNGGGGL. 2 stretches are compositionally biased toward low complexity: residues 1399–1410 and 1527–1549; these read DSNISPSELSSS and SSSKSPSIPSSSSASASALSPNS. Composition is skewed to polar residues over residues 1554–1563 and 1626–1665; these read ELGNGKTTQS and KPSTPTFLSNQPSPATSNSPQLLQSPTTSTTGSINLSPHR. Composition is skewed to low complexity over residues 1755–1774 and 1781–1821; these read QKPQQQQQKPTTTTTTTSTQ and KTTT…TTTT. One can recognise a Response regulatory domain in the interval 1840 to 1967; that stretch reads KILLVEDNFV…DILIQMIKKH (128 aa). Asp1889 is modified (4-aspartylphosphate).

It is found in the membrane. It catalyses the reaction ATP + protein L-histidine = ADP + protein N-phospho-L-histidine.. In terms of biological role, acts in the cytokinin signal transduction pathway that regulates spore germination. Required for the maintenance of spore dormancy. Does not appear to act as a cytokinin receptor. Probably undergoes ATP-dependent autophosphorylation at a conserved histidine residue in the kinase core, which is followed by transfer of the phosphoryl group to a conserved aspartate residue in the receiver domain. The sequence is that of Hybrid signal transduction histidine kinase B (dhkB) from Dictyostelium discoideum (Social amoeba).